The chain runs to 192 residues: LOB domain-containing protein 32 (192 aa).

The region spanning 4 to 105 (NRCAVCKILN…QDIESAVNEL (102 aa)) is the LOB domain.

This sequence belongs to the LOB domain-containing protein family.

The chain is LOB domain-containing protein 32 (LBD32) from Arabidopsis thaliana (Mouse-ear cress).